Here is a 338-residue protein sequence, read N- to C-terminus: DNA-directed RNA polymerase subunit alpha (338 aa).

The interval 1-234 is alpha N-terminal domain (alpha-NTD); that stretch reads MIHKNWAELI…DQLSIFVNFD (234 aa). Residues 250-338 form an alpha C-terminal domain (alpha-CTD) region; that stretch reads FNPLLLKKVD…DLAKKFEDAF (89 aa).

This sequence belongs to the RNA polymerase alpha chain family. In terms of assembly, homodimer. The RNAP catalytic core consists of 2 alpha, 1 beta, 1 beta' and 1 omega subunit. When a sigma factor is associated with the core the holoenzyme is formed, which can initiate transcription.

It carries out the reaction RNA(n) + a ribonucleoside 5'-triphosphate = RNA(n+1) + diphosphate. DNA-dependent RNA polymerase catalyzes the transcription of DNA into RNA using the four ribonucleoside triphosphates as substrates. The sequence is that of DNA-directed RNA polymerase subunit alpha from Ruegeria pomeroyi (strain ATCC 700808 / DSM 15171 / DSS-3) (Silicibacter pomeroyi).